The chain runs to 258 residues: Trifolitoxin-processing protein TfxF (258 aa).

The actions of the proteins TfxB, TfxD and TfxF are implicated in the processing of the inactive trifolitoxin (TfxA) precursor into the active peptide. The protein is Trifolitoxin-processing protein TfxF (tfxF) of Rhizobium leguminosarum bv. trifolii.